The following is a 249-amino-acid chain: Mediator of RNA polymerase II transcription subunit 8 (249 aa).

A coiled-coil region spans residues 154 to 200 (LEEREMGIQNVVTGLRRQLEDEDEEASESEEEVEEEEMEVVGVRRRS). Residues 170–249 (RQLEDEDEEA…MTTGIPPTQR (80 aa)) form a disordered region. The segment covering 173-192 (EDEDEEASESEEEVEEEEME) has biased composition (acidic residues). Over residues 211 to 232 (AAPAPGSRQQQQQQKAAGPAVP) the composition is skewed to low complexity.

The protein belongs to the Mediator complex subunit 8 family. In terms of assembly, component of the Mediator complex.

The protein resides in the nucleus. Its function is as follows. Component of the Mediator complex, a coactivator involved in the regulated transcription of nearly all RNA polymerase II-dependent genes. Mediator functions as a bridge to convey information from gene-specific regulatory proteins to the basal RNA polymerase II transcription machinery. Mediator is recruited to promoters by direct interactions with regulatory proteins and serves as a scaffold for the assembly of a functional preinitiation complex with RNA polymerase II and the general transcription factors. The chain is Mediator of RNA polymerase II transcription subunit 8 (med8) from Aspergillus fumigatus (strain ATCC MYA-4609 / CBS 101355 / FGSC A1100 / Af293) (Neosartorya fumigata).